We begin with the raw amino-acid sequence, 283 residues long: Polyamine aminopropyltransferase (283 aa).

One can recognise a PABS domain in the interval 5-240; the sequence is NTWFTEIHQD…GWWTATMACK (236 aa). Residue Gln33 coordinates S-methyl-5'-thioadenosine. Spermidine-binding residues include His64 and Asp88. S-methyl-5'-thioadenosine-binding positions include Asp108 and 139 to 140; that span reads DG. Asp158 functions as the Proton acceptor in the catalytic mechanism. 158-161 provides a ligand contact to spermidine; sequence DSTD. An S-methyl-5'-thioadenosine-binding site is contributed by Pro165.

It belongs to the spermidine/spermine synthase family. Homodimer or homotetramer.

It is found in the cytoplasm. The catalysed reaction is S-adenosyl 3-(methylsulfanyl)propylamine + putrescine = S-methyl-5'-thioadenosine + spermidine + H(+). It participates in amine and polyamine biosynthesis; spermidine biosynthesis; spermidine from putrescine: step 1/1. In terms of biological role, catalyzes the irreversible transfer of a propylamine group from the amino donor S-adenosylmethioninamine (decarboxy-AdoMet) to putrescine (1,4-diaminobutane) to yield spermidine. In Thioalkalivibrio sulfidiphilus (strain HL-EbGR7), this protein is Polyamine aminopropyltransferase.